The primary structure comprises 1887 residues: ATP-dependent DNA helicase tlh1 (1887 aa).

Residues 329 to 347 (NQQRREQQDKGENKKRQDD) are compositionally biased toward basic and acidic residues. Disordered regions lie at residues 329–372 (NQQR…EEEE), 504–552 (ERKE…NTDD), and 1110–1135 (MVEG…EMTQ). 2 stretches are compositionally biased toward acidic residues: residues 360–372 (LEDD…EEEE) and 524–533 (SAEDDNDNDN). Residues 540–549 (NNNNNNNNTN) show a composition bias toward low complexity. Residues 1112-1131 (EGDKEKDKTNEEKNKDEVKA) show a composition bias toward basic and acidic residues. The 176-residue stretch at 1200–1375 (YFSLLNRMNL…RQTFCTNFYV (176 aa)) folds into the Helicase ATP-binding domain. Residues 1213 to 1220 (LPTGGGKS) and 1240 to 1247 (MNMVTLVL) each bind ATP. The short motif at 1322–1325 (DEAH) is the DEAH box element. The Helicase C-terminal domain occupies 1401–1559 (DLRTLMKRTK…CVRSFLASEM (159 aa)). The segment at 1613-1643 (YNASFSSSPPPQPGNSSGMSAMNTNTTSTTP) is disordered. The segment covering 1626-1642 (GNSSGMSAMNTNTTSTT) has biased composition (low complexity). The segment at 1804–1821 (STCYKCGKADHNLRECKL) adopts a CCHC-type zinc-finger fold.

This sequence belongs to the helicase family. RecQ subfamily.

It catalyses the reaction Couples ATP hydrolysis with the unwinding of duplex DNA by translocating in the 3'-5' direction.. The enzyme catalyses ATP + H2O = ADP + phosphate + H(+). Functionally, a probable ATP-dependent 3'-5' DNA helicase. Has a role in telomerase-independent telomere maintenance. The polypeptide is ATP-dependent DNA helicase tlh1 (Schizosaccharomyces pombe (strain 972 / ATCC 24843) (Fission yeast)).